Here is a 290-residue protein sequence, read N- to C-terminus: Glutamyl-Q tRNA(Asp) synthetase (290 aa).

L-glutamate is bound by residues 9–13 (RFAPS) and Glu45. A 'HIGH' region motif is present at residues 12-22 (PSPSGSLHFGS). The Zn(2+) site is built by Cys101, Cys103, Tyr115, and Cys119. The L-glutamate site is built by Tyr170 and Arg188. The short motif at 226-230 (KLSKQ) is the 'KMSKS' region element. Lys229 contributes to the ATP binding site.

It belongs to the class-I aminoacyl-tRNA synthetase family. GluQ subfamily. It depends on Zn(2+) as a cofactor.

Its function is as follows. Catalyzes the tRNA-independent activation of glutamate in presence of ATP and the subsequent transfer of glutamate onto a tRNA(Asp). Glutamate is transferred on the 2-amino-5-(4,5-dihydroxy-2-cyclopenten-1-yl) moiety of the queuosine in the wobble position of the QUC anticodon. This chain is Glutamyl-Q tRNA(Asp) synthetase, found in Shewanella amazonensis (strain ATCC BAA-1098 / SB2B).